The following is a 201-amino-acid chain: Lymphotoxin-alpha (201 aa).

Residues 1 to 27 form the signal peptide; sequence MTSSGVLCLLGALSLQVLLLQPPGAQG. A disordered region spans residues 23 to 52; sequence PGAQGAPNPDNSHSSSPAPPQTAQHLSQKS. The span at 31-51 shows a compositional bias: polar residues; it reads PDNSHSSSPAPPQTAQHLSQK. The 142-residue stretch at 60 to 201 folds into the THD domain; that stretch reads PAAHLVGDPS…SSVFFGAFAL (142 aa). A glycan (N-linked (GlcNAc...) asparagine) is linked at N93. C117 and C152 form a disulfide bridge.

It belongs to the tumor necrosis factor family. As to quaternary structure, homotrimer, and heterotrimer of either two LTB and one LTA subunits or (less prevalent) two LTA and one LTB subunits. Interacts with TNFRSF14.

The protein localises to the secreted. The protein resides in the membrane. In terms of biological role, cytokine that in its homotrimeric form binds to TNFRSF1A/TNFR1, TNFRSF1B/TNFBR and TNFRSF14/HVEM. In its heterotrimeric form with LTB binds to TNFRSF3/LTBR. Lymphotoxin is produced by lymphocytes and is cytotoxic for a wide range of tumor cells in vitro and in vivo. The sequence is that of Lymphotoxin-alpha (LTA) from Notamacropus eugenii (Tammar wallaby).